The chain runs to 340 residues: S-adenosylmethionine:tRNA ribosyltransferase-isomerase (340 aa).

It belongs to the QueA family. As to quaternary structure, monomer.

It is found in the cytoplasm. The enzyme catalyses 7-aminomethyl-7-carbaguanosine(34) in tRNA + S-adenosyl-L-methionine = epoxyqueuosine(34) in tRNA + adenine + L-methionine + 2 H(+). Its pathway is tRNA modification; tRNA-queuosine biosynthesis. Its function is as follows. Transfers and isomerizes the ribose moiety from AdoMet to the 7-aminomethyl group of 7-deazaguanine (preQ1-tRNA) to give epoxyqueuosine (oQ-tRNA). This Francisella tularensis subsp. tularensis (strain FSC 198) protein is S-adenosylmethionine:tRNA ribosyltransferase-isomerase.